An 86-amino-acid chain; its full sequence is YcgL domain-containing protein XCC3997 (86 aa).

Positions 1-83 constitute a YcgL domain; sequence MHAYVYKSQR…PKTVVLAGEC (83 aa).

The polypeptide is YcgL domain-containing protein XCC3997 (Xanthomonas campestris pv. campestris (strain ATCC 33913 / DSM 3586 / NCPPB 528 / LMG 568 / P 25)).